Reading from the N-terminus, the 228-residue chain is 7-cyano-7-deazaguanine synthase (228 aa).

Position 16 to 26 (16 to 26) interacts with ATP; sequence FSGGQDSTTCL. Zn(2+) is bound by residues C193, C201, C204, and C207.

It belongs to the QueC family. It depends on Zn(2+) as a cofactor.

It catalyses the reaction 7-carboxy-7-deazaguanine + NH4(+) + ATP = 7-cyano-7-deazaguanine + ADP + phosphate + H2O + H(+). Its pathway is purine metabolism; 7-cyano-7-deazaguanine biosynthesis. Its function is as follows. Catalyzes the ATP-dependent conversion of 7-carboxy-7-deazaguanine (CDG) to 7-cyano-7-deazaguanine (preQ(0)). The sequence is that of 7-cyano-7-deazaguanine synthase from Pasteurella multocida (strain Pm70).